We begin with the raw amino-acid sequence, 465 residues long: Ribosomal oxygenase 2 (465 aa).

In terms of domain architecture, JmjC spans 139 to 271 (QPQRFKDELW…NSWGDFLLDT (133 aa)). 3 residues coordinate Fe cation: His-179, Asp-181, and His-240. Residue Ser-309 is modified to Phosphoserine.

This sequence belongs to the ROX family. MINA53 subfamily. It depends on Fe(2+) as a cofactor. Expressed in liver, skeletal muscle, heart, pancreas, and placenta. Not detected in brain, lung or kidney. Expressed in several lung cancer tissues, but is barely detected in the adjacent non-cancerous tissues. Also highly expressed in several esophageal squamous cell carcinoma (ESCC), and colon cancer tissues, and in various cancer cell lines.

Its subcellular location is the nucleus. The protein localises to the nucleolus. It carries out the reaction L-histidyl-[protein] + 2-oxoglutarate + O2 = (3S)-3-hydroxy-L-histidyl-[protein] + succinate + CO2. The catalysed reaction is L-histidyl-[ribosomal protein uL15] + 2-oxoglutarate + O2 = (3S)-3-hydroxy-L-histidyl-[ribosomal protein uL15] + succinate + CO2. Oxygenase that can act as both a histone lysine demethylase and a ribosomal histidine hydroxylase. Is involved in the demethylation of trimethylated 'Lys-9' on histone H3 (H3K9me3), leading to an increase in ribosomal RNA expression. Also catalyzes the hydroxylation of 60S ribosomal protein L27a on 'His-39'. May play an important role in cell growth and survival. May be involved in ribosome biogenesis, most likely during the assembly process of pre-ribosomal particles. This is Ribosomal oxygenase 2 from Homo sapiens (Human).